Here is a 248-residue protein sequence, read N- to C-terminus: UPF0328 protein ECU06_0030/ECU06_1690/ECU11_0020 (248 aa).

2 disordered regions span residues 1–34 (MVRH…HPSR) and 51–81 (ASAE…ILPD). 2 stretches are compositionally biased toward polar residues: residues 10 to 19 (PKTTNPNPES) and 61 to 76 (QNLS…THQS).

The protein belongs to the UPF0328 family.

The protein is UPF0328 protein ECU06_0030/ECU06_1690/ECU11_0020 of Encephalitozoon cuniculi (strain GB-M1) (Microsporidian parasite).